The primary structure comprises 146 residues: Sordarin/hypoxysordarin biosynthesis cluster protein G (146 aa).

It participates in antibiotic biosynthesis. In terms of biological role, part of the gene cluster that mediates the biosynthesis of sordarin and hypoxysordarin, glycoside antibiotics with a unique tetracyclic diterpene aglycone structure. First, the geranylgeranyl diphosphate synthase sdnC constructs GGDP from farnesyl diphosphate and isopentenyl diphosphate. The diterpene cyclase sdnA then catalyzes the cyclization of GGDP to afford cycloaraneosene. Cycloaraneosene is then hydroxylated four times by the putative cytochrome P450 monooxygenases sdnB, sdnE, sdnF and sdnH to give a hydroxylated cycloaraneosene derivative such as cycloaraneosene-8,9,13,19-tetraol. Although the order of the hydroxylations is unclear, at least C8, C9 and C13 of the cycloaraneosene skeleton are hydroxylated before the sordaricin formation. Dehydration of the 13-hydroxy group of the hydroxylated cycloaraneosene derivative might be catalyzed by an unassigned hypothetical protein such as sdnG and sdnP to construct the cyclopentadiene moiety. The FAD-dependent oxidoreductase sdnN is proposed to catalyze the oxidation at C9 of the hydroxylated cycloaraneosene derivative and also catalyze the Baeyer-Villiger oxidation to give the lactone intermediate. The presumed lactone intermediate would be hydrolyzed to give an acrolein moiety and a carboxylate moiety. Then, [4+2]cycloaddition would occur between the acrolein moiety and the cyclopentadiene moiety to give sordaricin. SdnN might also be involved in the [4+2]cycloaddition after the hypothesized oxidation to accommodate the oxidized product and prompt the [4+2]cycloaddition. GDP-6-deoxy-D-altrose may be biosynthesized from GDP-D-mannose by the putative GDP-mannose-4,6-dehydratase sdnI and the short-chain dehydrogenase sdnK. The glycosyltransferase sdnJ catalyzes the attachment of 6-deoxy-D-altrose onto the 19-hydroxy group of sordaricin to give 4'-O-demethylsordarin. The methyltransferase sdnD would complete the biosynthesis of sordarin. Sordarin can be further modified into hypoxysordarin. The unique acyl chain at the 3'-hydroxy group of hypoxysordarin would be constructed by an iterative type I PKS sdnO and the trans-acting polyketide methyltransferase sdnL. SdnL would be responsible for the introduction of an alpha-methyl group of the polyketide chain. Alternatively, the beta-lactamase-like protein sdnR might be responsible for the cleavage and transfer of the polyketide chain from the PKS sdnO to sordarin. Two putative cytochrome P450 monooxygenases, sdnQ and sdnT, might catalyze the epoxidations of the polyketide chain to complete the biosynthesis of hypoxysordarin. Transcriptional regulators sdnM and sdnS are presumably encoded for the transcriptional regulation of the expression of the sdn gene cluster. In Sordaria araneosa (Pleurage araneosa), this protein is Sordarin/hypoxysordarin biosynthesis cluster protein G.